The following is a 223-amino-acid chain: MRVLVVEDNALLRHHLKVQIQDAGHQVDDAEDAKEADYYLNEHLPDIAIVDLGLPDEDGLSLIRRWRSNDVSLPILVLTARESWQDKVEVLSAGADDYVTKPFHIEEVMARMQALMRRNSGLASQVISLPPFQVDLSRRELSINDEVIKLTAFEYTIMETLIRNNGKVVSKDSLMLQLYPDAELRESHTIDVLMGRLRKKIQAQYPQEVITTVRGQGYLFELR.

The Response regulatory domain maps to 2 to 116; the sequence is RVLVVEDNAL…EVMARMQALM (115 aa). Aspartate 51 is subject to 4-aspartylphosphate. The ompR/PhoB-type DNA-binding region spans 124–222; sequence SQVISLPPFQ…VRGQGYLFEL (99 aa).

Phosphorylated by PhoQ.

It is found in the cytoplasm. Functionally, member of the two-component regulatory system PhoQ/PhoP involved in virulence and adaptation to low Mg(2+) environments. Necessary for resistance to killing by polymorphonuclear leukocytes (PMNs) and cationic antimicrobial peptides (CAMP) they produce. This is Virulence transcriptional regulatory protein PhoP (phoP) from Shigella flexneri.